The chain runs to 487 residues: Serralysin (487 aa).

A propeptide spanning residues 1–16 is cleaved from the precursor; that stretch reads MQSTKKAIEITESSLA. Zn(2+) is bound at residue H192. The active site involves E193. Residues H196, H202, and Y232 each contribute to the Zn(2+) site. 33 residues coordinate Ca(2+): R269, G271, T273, D301, G303, G304, D306, T343, E345, G350, G352, D354, N359, A361, N363, G367, G368, A369, G370, D372, G376, G377, G378, G379, D381, G385, G386, A387, G388, D390, D399, D406, and D416. Hemolysin-type calcium-binding repeat units lie at residues 348–365 and 366–383; these read IGGSGNDVIVGNAANNVL and KGGAGNDVLFGGGGADEL.

It belongs to the peptidase M10B family. The cofactor is Ca(2+). Zn(2+) serves as cofactor.

Its subcellular location is the secreted. It catalyses the reaction Preferential cleavage of bonds with hydrophobic residues in P1'.. Its function is as follows. Has insecticidal activity against the locust M.palpalis. When administered orally to locusts at a low dose it causes them to lie on their sides exhibiting sporadic limb movements and muscular twitching, followed by full recovery. When administered at higher doses the same symptoms are observed, followed by death. In Serratia marcescens, this protein is Serralysin.